The following is a 190-amino-acid chain: Crossover junction endodeoxyribonuclease RuvC (190 aa).

Residues aspartate 7, glutamate 67, and aspartate 140 contribute to the active site. Aspartate 7, glutamate 67, and aspartate 140 together coordinate Mg(2+).

It belongs to the RuvC family. In terms of assembly, homodimer which binds Holliday junction (HJ) DNA. The HJ becomes 2-fold symmetrical on binding to RuvC with unstacked arms; it has a different conformation from HJ DNA in complex with RuvA. In the full resolvosome a probable DNA-RuvA(4)-RuvB(12)-RuvC(2) complex forms which resolves the HJ. Mg(2+) serves as cofactor.

The protein resides in the cytoplasm. It catalyses the reaction Endonucleolytic cleavage at a junction such as a reciprocal single-stranded crossover between two homologous DNA duplexes (Holliday junction).. The RuvA-RuvB-RuvC complex processes Holliday junction (HJ) DNA during genetic recombination and DNA repair. Endonuclease that resolves HJ intermediates. Cleaves cruciform DNA by making single-stranded nicks across the HJ at symmetrical positions within the homologous arms, yielding a 5'-phosphate and a 3'-hydroxyl group; requires a central core of homology in the junction. The consensus cleavage sequence is 5'-(A/T)TT(C/G)-3'. Cleavage occurs on the 3'-side of the TT dinucleotide at the point of strand exchange. HJ branch migration catalyzed by RuvA-RuvB allows RuvC to scan DNA until it finds its consensus sequence, where it cleaves and resolves the cruciform DNA. The sequence is that of Crossover junction endodeoxyribonuclease RuvC from Fusobacterium nucleatum subsp. nucleatum (strain ATCC 25586 / DSM 15643 / BCRC 10681 / CIP 101130 / JCM 8532 / KCTC 2640 / LMG 13131 / VPI 4355).